The primary structure comprises 239 residues: Ribonuclease 3 (239 aa).

The RNase III domain maps to 12–137 (RAKLEGLIGH…LIAAIYLDGG (126 aa)). E50 provides a ligand contact to Mg(2+). The active site involves D54. 2 residues coordinate Mg(2+): D123 and E126. Residue E126 is part of the active site. One can recognise a DRBM domain in the interval 162–231 (DAKTELQEWS…ATKMLEREGI (70 aa)).

The protein belongs to the ribonuclease III family. In terms of assembly, homodimer. It depends on Mg(2+) as a cofactor.

The protein resides in the cytoplasm. It carries out the reaction Endonucleolytic cleavage to 5'-phosphomonoester.. Functionally, digests double-stranded RNA. Involved in the processing of primary rRNA transcript to yield the immediate precursors to the large and small rRNAs (23S and 16S). Processes some mRNAs, and tRNAs when they are encoded in the rRNA operon. Processes pre-crRNA and tracrRNA of type II CRISPR loci if present in the organism. In Rhizobium leguminosarum bv. trifolii (strain WSM2304), this protein is Ribonuclease 3.